Consider the following 426-residue polypeptide: D-tagatose-1,6-bisphosphate aldolase subunit KbaZ (426 aa).

This sequence belongs to the GatZ/KbaZ family. KbaZ subfamily. As to quaternary structure, forms a complex with KbaY.

Its pathway is carbohydrate metabolism; D-tagatose 6-phosphate degradation; D-glyceraldehyde 3-phosphate and glycerone phosphate from D-tagatose 6-phosphate: step 2/2. Functionally, component of the tagatose-1,6-bisphosphate aldolase KbaYZ that is required for full activity and stability of the Y subunit. Could have a chaperone-like function for the proper and stable folding of KbaY. When expressed alone, KbaZ does not show any aldolase activity. The polypeptide is D-tagatose-1,6-bisphosphate aldolase subunit KbaZ (Escherichia coli O139:H28 (strain E24377A / ETEC)).